Here is a 113-residue protein sequence, read N- to C-terminus: Retrotransposon Gag-like protein 8A (113 aa).

Belongs to the FAM127 family.

The chain is Retrotransposon Gag-like protein 8A from Homo sapiens (Human).